The sequence spans 473 residues: Lactate utilization protein B (473 aa).

4Fe-4S ferredoxin-type domains are found at residues 302 to 332 (GSEF…GHSY) and 351 to 380 (YNDY…LHDL). The [4Fe-4S] cluster site is built by Cys-311, Cys-314, Cys-317, Cys-321, Cys-364, Cys-367, and Cys-371.

The protein belongs to the LutB/YkgF family.

Functionally, is involved in L-lactate degradation and allows cells to grow with lactate as the sole carbon source. Has probably a role as an electron transporter during oxidation of L-lactate. The sequence is that of Lactate utilization protein B from Bacillus cereus (strain AH820).